The following is a 619-amino-acid chain: P-granule-associated protein deps-1 (619 aa).

Residues 62–101 (NFDNIEEAKNLERRSKIPLKFGEVILWNESDCDHDKRIIL) are required for prg-1 binding. 2 stretches are compositionally biased toward low complexity: residues 563-592 (SRAT…AATS) and 600-619 (GPSS…SSRV). The interval 563 to 619 (SRATSARTTPAGSSIGSRSSIQSRASAATSVSSNRFVGPSSRRTPSGTPQSSTSSRV) is disordered.

In terms of assembly, interacts (via N-terminus) with prg-1; the interaction is direct. May interact with edg-1. In terms of tissue distribution, expressed in germ cells.

The protein localises to the cytoplasmic granule. It is found in the cytoplasm. The protein resides in the perinuclear region. In terms of biological role, component of P-granules which is required for P-granule formation and integrity in adult germ cells. Promotes the accumulation of glh-1 mRNA and localization of pgl-1 to P-granules. Involved in RNA-mediated gene silencing (RNAi) in the germline. In particular, it is required for piwi-interacting RNA (piRNA) gene silencing and positively regulates the formation of secondary 22G-RNAs, which are RNA-dependent RNA polymerase-derived endo-siRNAs, typically 22 nucleotides in length with a 5'guanosine residue. Its role in RNAi may also be through positively regulating the expression of the dsRNA-binding protein rde-4. Plays a role in small RNA-directed transgenerational epigenetic inheritance. The polypeptide is P-granule-associated protein deps-1 (Caenorhabditis elegans).